The chain runs to 557 residues: Potassium-transporting ATPase potassium-binding subunit (557 aa).

The next 12 membrane-spanning stretches (helical) occupy residues 5–25 (GFLLIATFLLVLMVLARPLGS), 63–83 (LCAILGLNMLGLAVLFFMLLG), 132–152 (GLTVQNFLSAASGIAVIFALI), 170–190 (LLRITLWVLVPVALLIALFFI), 253–273 (FVQMLAIFLIPTALCFAFGEV), 283–303 (LLWAMSVIFVICVGVVMWAEV), 329–349 (VLVSSLFAVVTTAASCGAVIA), 356–376 (ALGGMVPMWLMQIGEVVFGGV), 379–399 (GLYGMMLFVLLAVFIAGLMIG), 416–436 (LTALAILVTPTLVLMGAALAM), 484–504 (LLAFCMFVGRFGVIIPVMAIA), and 526–546 (LFVGLLIGTVLLVGALTFIPA).

Belongs to the KdpA family. As to quaternary structure, the system is composed of three essential subunits: KdpA, KdpB and KdpC.

The protein localises to the cell inner membrane. Functionally, part of the high-affinity ATP-driven potassium transport (or Kdp) system, which catalyzes the hydrolysis of ATP coupled with the electrogenic transport of potassium into the cytoplasm. This subunit binds the periplasmic potassium ions and delivers the ions to the membrane domain of KdpB through an intramembrane tunnel. In Escherichia coli O139:H28 (strain E24377A / ETEC), this protein is Potassium-transporting ATPase potassium-binding subunit.